A 509-amino-acid chain; its full sequence is Zinc finger protein Aiolos (509 aa).

A compositionally biased stretch (polar residues) spans 1–19 (MEDIQTNAELKSTQEQSVP). Residues 1-86 (MEDIQTNAEL…MGNAEEPEIP (86 aa)) form a disordered region. 2 positions are modified to phosphoserine: Ser22 and Ser42. Basic and acidic residues predominate over residues 56 to 72 (DSMKVKDEYSERDENVL). Residues Lys61, Lys73, and Lys100 each participate in a glycyl lysine isopeptide (Lys-Gly) (interchain with G-Cter in SUMO2) cross-link. 3 consecutive C2H2-type zinc fingers follow at residues 118–140 (MNCD…KRSH), 146–168 (FQCN…IKLH), and 174–196 (FKCH…LRTH). The C2H2-type 4; atypical zinc finger occupies 202-224 (YKCEFCGRSYKQRSSLEEHKERC). Residue Lys245 forms a Glycyl lysine isopeptide (Lys-Gly) (interchain with G-Cter in SUMO2) linkage. Position 326 is a phosphothreonine (Thr326). Residues 364 to 394 (IHLPEKSVPSERGLSPNNSGHDSTDTDSNHE) are disordered. At Ser378 the chain carries Phosphoserine. Positions 385 to 394 (DSTDTDSNHE) are enriched in basic and acidic residues. Residues 452–474 (YRCDHCRVLFLDYVMFTIHMGCH) form a C2H2-type 5 zinc finger. Residues 452 to 504 (YRCDHCRVLFLDYVMFTIHMGCHGFRDPFECNMCGYRSHDRYEFSSHIARGEH) are mediates homodimerization and heterodimerization. A C2H2-type 6; atypical zinc finger spans residues 480-504 (FECNMCGYRSHDRYEFSSHIARGEH).

The protein belongs to the Ikaros C2H2-type zinc-finger protein family. In terms of assembly, homodimer. Heterodimer with other IKAROS family members. Interacts with IKZF4 and IKZF5. Interacts with IKZF1. Interacts with HRAS. Interacts with FOXP3; this interaction may be required for silencing target genes and regulating the suppressive activity of FOXP3-positive regulatory T-cells (Treg). Interacts with BCL21L isoform Bcl-X(L); this interaction blocks the anti-apoptotic role of BCL21L. Associates with histone deacetylase complexes containing HDAC1, MTA2 and SIN3A. In terms of processing, phosphorylation on tyrosine residues induced by IL2 is required for dissociation from HRAS and nuclear translocation of IKZF3 in T-cells. Phosphorylation on tyrosine residues induced by IL4 is required for dissociation from Bcl-X(L) in T-cells. As to expression, expressed most strongly in peripheral blood leukocytes, the spleen, and the thymus.

Its subcellular location is the nucleus. The protein resides in the cytoplasm. Its function is as follows. Transcription factor that plays an important role in the regulation of lymphocyte differentiation. Plays an essential role in regulation of B-cell differentiation, proliferation and maturation to an effector state. Involved in regulating BCL2 expression and controlling apoptosis in T-cells in an IL2-dependent manner. In Homo sapiens (Human), this protein is Zinc finger protein Aiolos (IKZF3).